A 346-amino-acid chain; its full sequence is UPF0421 protein OB2406 (346 aa).

The next 4 membrane-spanning stretches (helical) occupy residues 16–36 (IAVL…VFAV), 55–75 (LIRF…IALF), 102–122 (LLVA…NYVM), and 128–148 (LFTT…LLPP).

This sequence belongs to the UPF0421 family.

Its subcellular location is the cell membrane. The protein is UPF0421 protein OB2406 of Oceanobacillus iheyensis (strain DSM 14371 / CIP 107618 / JCM 11309 / KCTC 3954 / HTE831).